The chain runs to 200 residues: Probable GTP-binding protein EngB (200 aa).

The region spanning 26–200 (SIPEIAIAGR…IYEIAQCIKK (175 aa)) is the EngB-type G domain. GTP-binding positions include 34 to 41 (GRSNVGKS), 61 to 65 (GCTKQ), 80 to 83 (DLPG), 147 to 150 (TKID), and 176 to 179 (VISA). Ser-41 and Thr-63 together coordinate Mg(2+).

This sequence belongs to the TRAFAC class TrmE-Era-EngA-EngB-Septin-like GTPase superfamily. EngB GTPase family. It depends on Mg(2+) as a cofactor.

Necessary for normal cell division and for the maintenance of normal septation. The polypeptide is Probable GTP-binding protein EngB (Ehrlichia canis (strain Jake)).